The primary structure comprises 169 residues: Photosystem I assembly protein Ycf3 (169 aa).

3 TPR repeats span residues 35–68 (AFTY…ETDP), 72–105 (SYIL…NPSL), and 120–153 (GEQA…APGN).

This sequence belongs to the Ycf3 family.

The protein resides in the plastid. The protein localises to the chloroplast thylakoid membrane. In terms of biological role, essential for the assembly of the photosystem I (PSI) complex. May act as a chaperone-like factor to guide the assembly of the PSI subunits. This chain is Photosystem I assembly protein Ycf3, found in Pinus koraiensis (Korean pine).